The following is a 712-amino-acid chain: Polyribonucleotide nucleotidyltransferase (712 aa).

D487 and D493 together coordinate Mg(2+). The 60-residue stretch at 554-613 (PKIITMTINPDKIRDVIGPSGKQINKIIEETGVKIDIEQDGTVFISSINQEMNDKAKKII) folds into the KH domain. The S1 motif domain maps to 623–691 (GEIYEAKVKR…KQGRVNLSRK (69 aa)).

Belongs to the polyribonucleotide nucleotidyltransferase family. Mg(2+) is required as a cofactor.

Its subcellular location is the cytoplasm. The catalysed reaction is RNA(n+1) + phosphate = RNA(n) + a ribonucleoside 5'-diphosphate. Involved in mRNA degradation. Catalyzes the phosphorolysis of single-stranded polyribonucleotides processively in the 3'- to 5'-direction. This chain is Polyribonucleotide nucleotidyltransferase, found in Bacillus cereus (strain ATCC 14579 / DSM 31 / CCUG 7414 / JCM 2152 / NBRC 15305 / NCIMB 9373 / NCTC 2599 / NRRL B-3711).